The following is a 355-amino-acid chain: UDP-3-O-acylglucosamine N-acyltransferase (355 aa).

Residue histidine 248 is the Proton acceptor of the active site.

Belongs to the transferase hexapeptide repeat family. LpxD subfamily. Homotrimer.

It carries out the reaction a UDP-3-O-[(3R)-3-hydroxyacyl]-alpha-D-glucosamine + a (3R)-hydroxyacyl-[ACP] = a UDP-2-N,3-O-bis[(3R)-3-hydroxyacyl]-alpha-D-glucosamine + holo-[ACP] + H(+). It functions in the pathway bacterial outer membrane biogenesis; LPS lipid A biosynthesis. In terms of biological role, catalyzes the N-acylation of UDP-3-O-acylglucosamine using 3-hydroxyacyl-ACP as the acyl donor. Is involved in the biosynthesis of lipid A, a phosphorylated glycolipid that anchors the lipopolysaccharide to the outer membrane of the cell. This chain is UDP-3-O-acylglucosamine N-acyltransferase, found in Syntrophobacter fumaroxidans (strain DSM 10017 / MPOB).